We begin with the raw amino-acid sequence, 943 residues long: Protein translocase subunit SecA (943 aa).

ATP-binding positions include glutamine 90, 108-112 (GEGKT), and aspartate 509. The disordered stretch occupies residues 535-564 (PDNEHKPPIPKQRNSKSKGGFSKKASSKLK).

This sequence belongs to the SecA family. In terms of assembly, monomer and homodimer. Part of the essential Sec protein translocation apparatus which comprises SecA, SecYEG and auxiliary proteins SecDF. Other proteins may also be involved.

The protein resides in the cell inner membrane. It is found in the cellular thylakoid membrane. Its subcellular location is the cytoplasm. The enzyme catalyses ATP + H2O + cellular proteinSide 1 = ADP + phosphate + cellular proteinSide 2.. Functionally, part of the Sec protein translocase complex. Interacts with the SecYEG preprotein conducting channel. Has a central role in coupling the hydrolysis of ATP to the transfer of proteins into and across the cell membrane, serving as an ATP-driven molecular motor driving the stepwise translocation of polypeptide chains across the membrane. In terms of biological role, probably participates in protein translocation into and across both the cytoplasmic and thylakoid membranes in cyanobacterial cells. The polypeptide is Protein translocase subunit SecA (Prochlorococcus marinus (strain MIT 9215)).